Here is a 170-residue protein sequence, read N- to C-terminus: Acetyl-CoA decarbonylase/synthase complex subunit epsilon 2 (170 aa).

This sequence belongs to the CdhB family. Heterotetramer of two alpha and two epsilon subunits. The ACDS complex is made up of alpha, epsilon, beta, gamma and delta subunits with a probable stoichiometry of (alpha(2)epsilon(2))(4)-beta(8)-(gamma(1)delta(1))(8).

It functions in the pathway one-carbon metabolism; methanogenesis from acetate. Its function is as follows. Part of a complex that catalyzes the reversible cleavage of acetyl-CoA, allowing growth on acetate as sole source of carbon and energy. The alpha-epsilon subcomponent functions as a carbon monoxide dehydrogenase. The precise role of the epsilon subunit is unclear; it may have a stabilizing role within the alpha(2)epsilon(2) component and/or be involved in electron transfer to FAD during a potential FAD-mediated CO oxidation. The protein is Acetyl-CoA decarbonylase/synthase complex subunit epsilon 2 (cdhB2) of Methanosarcina thermophila.